The sequence spans 299 residues: Lipoyl synthase (299 aa).

[4Fe-4S] cluster-binding residues include Cys-45, Cys-50, Cys-56, Cys-71, Cys-75, Cys-78, and Ser-284. The region spanning 57 to 273 (YSKGTATFMI…GDVALAKDFL (217 aa)) is the Radical SAM core domain.

The protein belongs to the radical SAM superfamily. Lipoyl synthase family. It depends on [4Fe-4S] cluster as a cofactor.

The protein localises to the cytoplasm. The enzyme catalyses [[Fe-S] cluster scaffold protein carrying a second [4Fe-4S](2+) cluster] + N(6)-octanoyl-L-lysyl-[protein] + 2 oxidized [2Fe-2S]-[ferredoxin] + 2 S-adenosyl-L-methionine + 4 H(+) = [[Fe-S] cluster scaffold protein] + N(6)-[(R)-dihydrolipoyl]-L-lysyl-[protein] + 4 Fe(3+) + 2 hydrogen sulfide + 2 5'-deoxyadenosine + 2 L-methionine + 2 reduced [2Fe-2S]-[ferredoxin]. It participates in protein modification; protein lipoylation via endogenous pathway; protein N(6)-(lipoyl)lysine from octanoyl-[acyl-carrier-protein]: step 2/2. Its function is as follows. Catalyzes the radical-mediated insertion of two sulfur atoms into the C-6 and C-8 positions of the octanoyl moiety bound to the lipoyl domains of lipoate-dependent enzymes, thereby converting the octanoylated domains into lipoylated derivatives. This Desulfotalea psychrophila (strain LSv54 / DSM 12343) protein is Lipoyl synthase.